The primary structure comprises 420 residues: Putative competence-damage inducible protein (420 aa).

The protein belongs to the CinA family.

The polypeptide is Putative competence-damage inducible protein (Lactiplantibacillus plantarum (strain ATCC BAA-793 / NCIMB 8826 / WCFS1) (Lactobacillus plantarum)).